The following is a 210-amino-acid chain: Nucleoside triphosphate pyrophosphatase (210 aa).

D79 functions as the Proton acceptor in the catalytic mechanism.

The protein belongs to the Maf family. A divalent metal cation is required as a cofactor.

The protein localises to the cytoplasm. The catalysed reaction is a ribonucleoside 5'-triphosphate + H2O = a ribonucleoside 5'-phosphate + diphosphate + H(+). It carries out the reaction a 2'-deoxyribonucleoside 5'-triphosphate + H2O = a 2'-deoxyribonucleoside 5'-phosphate + diphosphate + H(+). Functionally, nucleoside triphosphate pyrophosphatase. May have a dual role in cell division arrest and in preventing the incorporation of modified nucleotides into cellular nucleic acids. The chain is Nucleoside triphosphate pyrophosphatase from Mycolicibacterium paratuberculosis (strain ATCC BAA-968 / K-10) (Mycobacterium paratuberculosis).